The sequence spans 1378 residues: Attractin-like protein 1 (1378 aa).

Residues M1–A51 form the signal peptide. Residues L52–Q90 form the EGF-like 1 domain. At L52 to L1229 the chain is on the extracellular side. Intrachain disulfides connect C62–C78, C80–C89, and C92–C118. An N-linked (GlcNAc...) asparagine glycan is attached at N75. Residues C92–N208 form the CUB domain. Residues N173 and N197 are each glycosylated (N-linked (GlcNAc...) asparagine). The 39-residue stretch at S206–D244 folds into the EGF-like 2 domain. 3 cysteine pairs are disulfide-bonded: C210–C220, C214–C232, and C234–C243. Kelch repeat units lie at residues F315–E364, I366–S414, V426–D474, S479–G530, M532–G590, and S591–N637. The N-linked (GlcNAc...) asparagine glycan is linked to N379. PSI domains are found at residues N613–P656, R665–H708, and I714–L759. N703 carries N-linked (GlcNAc...) asparagine glycosylation. In terms of domain architecture, C-type lectin spans V754–E872. The cysteines at positions 775 and 871 are disulfide-linked. N777 and N897 each carry an N-linked (GlcNAc...) asparagine glycan. 2 PSI domains span residues P888–S938 and N941–P1011. 8 disulfide bridges follow: C1013-C1021, C1015-C1027, C1030-C1039, C1042-C1056, C1059-C1068, C1061-C1075, C1077-C1087, and C1090-C1105. Laminin EGF-like domains follow at residues C1013 to A1058 and C1059 to Y1107. N-linked (GlcNAc...) asparagine glycosylation occurs at N1156. The helical transmembrane segment at V1230–V1250 threads the bilayer. Topologically, residues W1251–V1378 are cytoplasmic. The segment at V1287 to C1324 is interaction with MC4R. Positions Q1351–V1378 are disordered.

In terms of assembly, interacts with MC4R. In terms of tissue distribution, highly expressed in brain, heart, lung, kidney and liver. In the central nervous system, it is highly expressed in the dentate gyrus, CA1-3 regions of the hippocampus, and the ventral taenia tecta.

The protein resides in the cell membrane. Functionally, may play a role in melanocortin signaling pathways that regulate energy homeostasis. The sequence is that of Attractin-like protein 1 (Atrnl1) from Mus musculus (Mouse).